Reading from the N-terminus, the 465-residue chain is Mitochondrial distribution and morphology protein 10 (465 aa).

It belongs to the MDM10 family. As to quaternary structure, component of the ER-mitochondria encounter structure (ERMES) or MDM complex, composed of MMM1, MDM10, MDM12 and MDM34. Associates with the mitochondrial outer membrane sorting assembly machinery SAM(core) complex.

Its subcellular location is the mitochondrion outer membrane. Its function is as follows. Component of the ERMES/MDM complex, which serves as a molecular tether to connect the endoplasmic reticulum and mitochondria. Components of this complex are involved in the control of mitochondrial shape and protein biogenesis and may function in phospholipid exchange. MDM10 is involved in the late assembly steps of the general translocase of the mitochondrial outer membrane (TOM complex). Functions in the TOM40-specific route of the assembly of outer membrane beta-barrel proteins, including the association of TOM40 with the receptor TOM22 and small TOM proteins. Can associate with the SAM(core) complex as well as the MDM12-MMM1 complex, both involved in late steps of the major beta-barrel assembly pathway, that is responsible for biogenesis of all outer membrane beta-barrel proteins. May act as a switch that shuttles between both complexes and channels precursor proteins into the TOM40-specific pathway. Plays a role in mitochondrial morphology and in the inheritance of mitochondria. This Eremothecium gossypii (strain ATCC 10895 / CBS 109.51 / FGSC 9923 / NRRL Y-1056) (Yeast) protein is Mitochondrial distribution and morphology protein 10.